Consider the following 492-residue polypeptide: N-succinylglutamate 5-semialdehyde dehydrogenase (492 aa).

220–225 (GSANTG) lines the NAD(+) pocket. Residues glutamate 243 and cysteine 277 contribute to the active site.

It belongs to the aldehyde dehydrogenase family. AstD subfamily.

It catalyses the reaction N-succinyl-L-glutamate 5-semialdehyde + NAD(+) + H2O = N-succinyl-L-glutamate + NADH + 2 H(+). It functions in the pathway amino-acid degradation; L-arginine degradation via AST pathway; L-glutamate and succinate from L-arginine: step 4/5. Catalyzes the NAD-dependent reduction of succinylglutamate semialdehyde into succinylglutamate. The protein is N-succinylglutamate 5-semialdehyde dehydrogenase of Escherichia coli O17:K52:H18 (strain UMN026 / ExPEC).